A 2534-amino-acid polypeptide reads, in one-letter code: Highly reducing polyketide synthase easB (2534 aa).

Residues 1-49 form a disordered region; sequence MSPASRSRVEIADSESDSERLSSSPWSILSDNDSNTSDERSTRAGPGSL. In terms of domain architecture, Ketosynthase family 3 (KS3) spans 49–470; it reads LEPIAVIGIG…GTNAHVIIDA (422 aa). Residues C222, H356, and H396 each act as for beta-ketoacyl synthase activity in the active site. Residues 587-885 form a malonyl-CoA:ACP transacylase (MAT) domain region; the sequence is IFSGQGAQYA…LSGPVNQILK (299 aa). The tract at residues 973 to 1111 is N-terminal hotdog fold; it reads HELLGTLSAD…GLVQAEVDSV (139 aa). The tract at residues 973 to 1273 is dehydratase (DH) domain; it reads HELLGTLSAD…QGIRVTSLGG (301 aa). Positions 973-1277 constitute a PKS/mFAS DH domain; sequence HELLGTLSAD…VTSLGGDVAA (305 aa). The Proton acceptor; for dehydratase activity role is filled by H1005. The segment at 1131–1277 is C-terminal hotdog fold; that stretch reads THGTIPQKFY…VTSLGGDVAA (147 aa). D1193 acts as the Proton donor; for dehydratase activity in catalysis. The segment at 1395–1625 is methyltransferase (CMet) domain; sequence KTSALSLLTK…VFISTAPFPR (231 aa). Residues 1834 to 2146 form an enoyl reductase (ER) domain region; that stretch reads GLLETIRWKD…AGKHTGKIVL (313 aa). The region spanning 2452-2529 is the Carrier domain; sequence EAVHIVTNAI…QLAAIVAKES (78 aa). The interval 2453–2526 is ketoreductase (KR) domain; sequence AVHIVTNAIL…SISQLAAIVA (74 aa). The residue at position 2489 (S2489) is an O-(pantetheine 4'-phosphoryl)serine.

Its pathway is antibiotic biosynthesis. Its function is as follows. Polyketide synthase; part of the gene cluster that mediates the biosynthesis of emericellamides, secondary metabolites acting as antibiotics. The biosynthesis of emericellamides initiates from the highly reducing polyketide synthase easB which catalyzes the formation of the linear polyketide chain. EasB produces several polyketides that can be further processed by the downstream enzymes. The polyketides are released from easB as linear polyketide carboxylic acids, which are converted to CoA thioesters by the acyl-CoA ligase easD. The substrates are then loaded onto the acyltransferase easC, which shuttles them to the first thiolation (T) domain of the nonribosomal peptide synthetase easA. EasA then performs condensation of the polyketides with one glycine, two alanine, one valine and one leucine residues. A last step of cyclization leads to the production of emericellamides. This Emericella nidulans (strain FGSC A4 / ATCC 38163 / CBS 112.46 / NRRL 194 / M139) (Aspergillus nidulans) protein is Highly reducing polyketide synthase easB.